The following is a 787-amino-acid chain: Protein PAT1 homolog 2 (787 aa).

5 disordered regions span residues 94–120 (KHLG…WTQD), 134–221 (EQVQ…NASP), 338–374 (VREH…GLQF), 411–445 (LAKK…QQPQ), and 765–787 (VSES…FVRG). Residues 105 to 120 (GSFSRESSTATDWTQD) are compositionally biased toward polar residues. The span at 142-153 (SSQPQSSPNSNS) shows a compositional bias: low complexity. Composition is skewed to polar residues over residues 154–171 (LYRT…QHYS), 180–198 (STFT…SSPS), and 208–221 (GGSQ…NASP). Residues S184 and S192 each carry the phosphoserine modification. A compositionally biased stretch (basic residues) spans 341 to 353 (HKHKSSHRSRKNR). Polar residues-rich tracts occupy residues 355-373 (GISQ…SGLQ) and 436-445 (SRNSSDQQPQ).

Its function is as follows. Activator of mRNA decapping. Involved in mRNA decay via decapping. The sequence is that of Protein PAT1 homolog 2 from Arabidopsis thaliana (Mouse-ear cress).